The sequence spans 422 residues: Testin (422 aa).

The PET domain maps to 92-199 (MILTSPVAAK…GDVKLPKEVE (108 aa)). Positions 135–165 (QPVAGSEGAQYRKKQLAKQLPAHDQDPSKCH) are disordered. The span at 155–165 (PAHDQDPSKCH) shows a compositional bias: basic and acidic residues. LIM zinc-binding domains follow at residues 234–299 (YYCF…SEKP), 300–359 (RCAG…NHAV), and 360–422 (SCQG…KMSS).

Belongs to the prickle / espinas / testin family.

It is found in the cytoplasm. The protein localises to the cell cortex. It localises to the cell junction. The protein resides in the focal adhesion. In terms of biological role, scaffold protein that may play a role in cell adhesion, cell spreading and in the reorganization of the actin cytoskeleton. May inhibit cell growth. Regulates cranial neural crest migration. Acts together with prickle1 to control axial elongation. The chain is Testin from Xenopus tropicalis (Western clawed frog).